The following is a 558-amino-acid chain: MMIDPSKKYRPFPPVALADRTWPSATITKAPIWCAVDLRDGNQALVEPMGADRKVRMFQLLCELGYKEIEVGFPSASQTDFDFLRQLIERDMIPADVTIQVLTQAREDLISRTFQALEGASSAIVHLYNSTSTLQRRVVFALDRAGITDLAVRGAEMVREGAAKASASTKLRFQYSPESFTGTELDYAVEICEAVMGVFEPTAEAPLILNLPSTVEMATPNVYADQIEWFCRALPHRDRVLISLHPHNDRGTAVAAAELALMAGADRIEGTLFGNGERTGNVDLVTLGMNMFTQGIDPGIDFSNIDHIREIAEECNRLPVHPRHPYAGDLVFTAFSGSHQDAINKGLHAMEKTNQDVWEVPYLPIDPKDIGRSYEAVIRVNSQSGKGGVAHILERDYGIRMPRGLQVEFSKVVQAITDTTGEEITSRGLWKTFEETYLGAGSPYSFLEHHTRPDPAGKDQRILTATVKAGGKVRDIDGRGTGPIEALVDALRKDSGLAITIEDYEEHTLRPGSDAQAVAFIKASLPDGRAHYGVGIDANFVVASLKAVLCAANHLSDK.

Residues 31–306 (PIWCAVDLRD…DPGIDFSNID (276 aa)) enclose the Pyruvate carboxyltransferase domain. Asp-40, His-245, His-247, and Asn-281 together coordinate Mg(2+). Residues 440-558 (AGSPYSFLEH…LCAANHLSDK (119 aa)) form a regulatory domain region.

The protein belongs to the alpha-IPM synthase/homocitrate synthase family. LeuA type 2 subfamily. As to quaternary structure, homodimer. Requires Mg(2+) as cofactor.

It is found in the cytoplasm. The enzyme catalyses 3-methyl-2-oxobutanoate + acetyl-CoA + H2O = (2S)-2-isopropylmalate + CoA + H(+). It participates in amino-acid biosynthesis; L-leucine biosynthesis; L-leucine from 3-methyl-2-oxobutanoate: step 1/4. Catalyzes the condensation of the acetyl group of acetyl-CoA with 3-methyl-2-oxobutanoate (2-ketoisovalerate) to form 3-carboxy-3-hydroxy-4-methylpentanoate (2-isopropylmalate). The sequence is that of 2-isopropylmalate synthase from Rhodospirillum rubrum (strain ATCC 11170 / ATH 1.1.1 / DSM 467 / LMG 4362 / NCIMB 8255 / S1).